Consider the following 251-residue polypeptide: MRKPIIAGNWKMNKVLSEATSFVEEVKGAVPSPESVDSVVCAPALFLDRLVEATKGTDLKIGAQNMHFEENGAFTGEVSPVALADLGVNYVILGHSERREMFAETDETVNQKTIAAFKHGLTPIVCCGETNEEYEQDQTKTVVANQVQKALAGLTDEQVKQTVIAYEPIWAIGTGKSSTAEGANEVCAYIRSVVAEQFSQDVADAVRIQYGGSVKPANIKEYMSQSDIDGALVGGASLEADSFLQLLEAGK.

9-11 contributes to the substrate binding site; that stretch reads NWK. His95 functions as the Electrophile in the catalytic mechanism. Glu167 serves as the catalytic Proton acceptor. Residues Gly173, Ser213, and 234–235 contribute to the substrate site; that span reads GG. Position 213 is a phosphoserine (Ser213).

It belongs to the triosephosphate isomerase family. As to quaternary structure, homodimer.

It is found in the cytoplasm. The catalysed reaction is D-glyceraldehyde 3-phosphate = dihydroxyacetone phosphate. It participates in carbohydrate biosynthesis; gluconeogenesis. Its pathway is carbohydrate degradation; glycolysis; D-glyceraldehyde 3-phosphate from glycerone phosphate: step 1/1. Functionally, involved in the gluconeogenesis. Catalyzes stereospecifically the conversion of dihydroxyacetone phosphate (DHAP) to D-glyceraldehyde-3-phosphate (G3P). This is Triosephosphate isomerase from Priestia megaterium (strain DSM 319 / IMG 1521) (Bacillus megaterium).